Consider the following 533-residue polypeptide: GMP synthase [glutamine-hydrolyzing] (533 aa).

One can recognise a Glutamine amidotransferase type-1 domain in the interval 12 to 206 (TILVLDFGSQ…AVGICGAEQK (195 aa)). Catalysis depends on cysteine 88, which acts as the Nucleophile. Residues histidine 180 and glutamate 182 contribute to the active site. Residues 207–408 (WTMAEFIGQE…LGISPELVGR (202 aa)) enclose the GMPS ATP-PPase domain. 235 to 241 (SGGVDST) serves as a coordination point for ATP. Positions 308, 470, 525, and 531 each coordinate XMP.

Homodimer. The cofactor is Mg(2+).

The protein resides in the cytoplasm. The protein localises to the cytosol. The catalysed reaction is XMP + L-glutamine + ATP + H2O = GMP + L-glutamate + AMP + diphosphate + 2 H(+). Its pathway is purine metabolism; GMP biosynthesis; GMP from XMP (L-Gln route): step 1/1. Functionally, catalyzes the conversion of xanthine monophosphate (XMP) to GMP in the presence of glutamine and ATP through an adenyl-XMP intermediate. The sequence is that of GMP synthase [glutamine-hydrolyzing] (gua1) from Emericella nidulans (strain FGSC A4 / ATCC 38163 / CBS 112.46 / NRRL 194 / M139) (Aspergillus nidulans).